The chain runs to 680 residues: Harmonin-binding protein USHBP1 (680 aa).

Residues 1 to 15 (MSARATRPRSRRGRH) show a composition bias toward basic residues. Disordered stretches follow at residues 1 to 51 (MSAR…YLGP) and 134 to 161 (KSVE…PGQQ). Residues 179–218 (NREDELACTQASLQDAQAEKETLQRQVQELEDSLMQMEAS) are a coiled coil. Disordered stretches follow at residues 220–247 (PTPI…VPQD) and 384–405 (TMEV…PTPE). Coiled-coil stretches lie at residues 363-386 (TKGD…ATME) and 467-506 (QIQQ…LRAQ). The tract at residues 524–549 (FAGDGSSGGSSEDPSSEEEAGEDRQQ) is disordered. Positions 573–662 (QELSASLARA…QAEELAVLTA (90 aa)) form a coiled coil.

It belongs to the MCC family. In terms of assembly, interacts via its C-terminus with the first PDZ domain of USH1C.

This chain is Harmonin-binding protein USHBP1, found in Mus musculus (Mouse).